A 207-amino-acid polypeptide reads, in one-letter code: Small ribosomal subunit protein uS4 (207 aa).

A disordered region spans residues 31-55 (KCKLDSKPGQHGRTSGARTSDYGTQ). A compositionally biased stretch (polar residues) spans 42–53 (GRTSGARTSDYG). Positions 97–160 (SRLDNVVYRM…KKQARILEAL (64 aa)) constitute an S4 RNA-binding domain.

The protein belongs to the universal ribosomal protein uS4 family. In terms of assembly, part of the 30S ribosomal subunit. Contacts protein S5. The interaction surface between S4 and S5 is involved in control of translational fidelity.

Its function is as follows. One of the primary rRNA binding proteins, it binds directly to 16S rRNA where it nucleates assembly of the body of the 30S subunit. With S5 and S12 plays an important role in translational accuracy. This Paraburkholderia phymatum (strain DSM 17167 / CIP 108236 / LMG 21445 / STM815) (Burkholderia phymatum) protein is Small ribosomal subunit protein uS4.